Here is a 32-residue protein sequence, read N- to C-terminus: U3-theraphotoxin-Hhn1r (32 aa).

Cystine bridges form between Cys-2–Cys-15, Cys-9–Cys-20, and Cys-14–Cys-27.

This sequence belongs to the neurotoxin 10 (Hwtx-1) family. 16 (Hntx-8) subfamily. As to expression, expressed by the venom gland.

It is found in the secreted. Ion channel inhibitor. The chain is U3-theraphotoxin-Hhn1r from Cyriopagopus hainanus (Chinese bird spider).